Consider the following 207-residue polypeptide: Guanylate kinase (207 aa).

The Guanylate kinase-like domain maps to 6-185; the sequence is GLLIVLSGPS…AKERIQSIVE (180 aa). Residue 13-20 coordinates ATP; the sequence is GPSGVGKG.

It belongs to the guanylate kinase family.

It is found in the cytoplasm. The catalysed reaction is GMP + ATP = GDP + ADP. In terms of biological role, essential for recycling GMP and indirectly, cGMP. The sequence is that of Guanylate kinase from Staphylococcus haemolyticus (strain JCSC1435).